The chain runs to 93 residues: MAKGQSLQDPFLNALRRERVPVSIYLVNGIKLQGQVESFDQFVILLKNTVSQMVYKHAISTVVPARPFNVNSHTAAPSPAGGFNGQQDDNNDQ.

The region spanning 9-68 (DPFLNALRRERVPVSIYLVNGIKLQGQVESFDQFVILLKNTVSQMVYKHAISTVVPARPF) is the Sm domain. The segment at 70-93 (VNSHTAAPSPAGGFNGQQDDNNDQ) is disordered.

Belongs to the Hfq family. Homohexamer.

Its function is as follows. RNA chaperone that binds small regulatory RNA (sRNAs) and mRNAs to facilitate mRNA translational regulation in response to envelope stress, environmental stress and changes in metabolite concentrations. Also binds with high specificity to tRNAs. The sequence is that of RNA-binding protein Hfq from Shewanella sediminis (strain HAW-EB3).